The sequence spans 453 residues: Glutamyl-tRNA reductase (453 aa).

Residues 54–57 (TCNR), S113, 118–120 (EAQ), and Q124 each bind substrate. Residue C55 is the Nucleophile of the active site. 193–198 (GGGEVS) serves as a coordination point for NADP(+).

This sequence belongs to the glutamyl-tRNA reductase family. In terms of assembly, homodimer.

It catalyses the reaction (S)-4-amino-5-oxopentanoate + tRNA(Glu) + NADP(+) = L-glutamyl-tRNA(Glu) + NADPH + H(+). Its pathway is porphyrin-containing compound metabolism; protoporphyrin-IX biosynthesis; 5-aminolevulinate from L-glutamyl-tRNA(Glu): step 1/2. The protein operates within porphyrin-containing compound metabolism; chlorophyll biosynthesis. Catalyzes the NADPH-dependent reduction of glutamyl-tRNA(Glu) to glutamate 1-semialdehyde (GSA). This Chloroflexus aggregans (strain MD-66 / DSM 9485) protein is Glutamyl-tRNA reductase.